The sequence spans 162 residues: 2-C-methyl-D-erythritol 2,4-cyclodiphosphate synthase (162 aa).

A divalent metal cation-binding residues include Asp-8 and His-10. 4-CDP-2-C-methyl-D-erythritol 2-phosphate-binding positions include 8–10 (DVH) and 34–35 (HS). An a divalent metal cation-binding site is contributed by His-42. Residues 56 to 58 (DIG), 61 to 65 (FPDND), 132 to 135 (TTTE), Phe-139, and Lys-142 each bind 4-CDP-2-C-methyl-D-erythritol 2-phosphate.

It belongs to the IspF family. As to quaternary structure, homotrimer. The cofactor is a divalent metal cation.

It carries out the reaction 4-CDP-2-C-methyl-D-erythritol 2-phosphate = 2-C-methyl-D-erythritol 2,4-cyclic diphosphate + CMP. Its pathway is isoprenoid biosynthesis; isopentenyl diphosphate biosynthesis via DXP pathway; isopentenyl diphosphate from 1-deoxy-D-xylulose 5-phosphate: step 4/6. In terms of biological role, involved in the biosynthesis of isopentenyl diphosphate (IPP) and dimethylallyl diphosphate (DMAPP), two major building blocks of isoprenoid compounds. Catalyzes the conversion of 4-diphosphocytidyl-2-C-methyl-D-erythritol 2-phosphate (CDP-ME2P) to 2-C-methyl-D-erythritol 2,4-cyclodiphosphate (ME-CPP) with a corresponding release of cytidine 5-monophosphate (CMP). This chain is 2-C-methyl-D-erythritol 2,4-cyclodiphosphate synthase, found in Pelotomaculum thermopropionicum (strain DSM 13744 / JCM 10971 / SI).